We begin with the raw amino-acid sequence, 451 residues long: tRNA-2-methylthio-N(6)-dimethylallyladenosine synthase (451 aa).

In terms of domain architecture, MTTase N-terminal spans 6–122 (RRYHIITFGC…LDQLLEQVWA (117 aa)). The [4Fe-4S] cluster site is built by Cys-15, Cys-51, Cys-85, Cys-157, Cys-161, and Cys-164. The Radical SAM core domain occupies 143 to 384 (RESTVSAWVN…STQAMERSQR (242 aa)). Residues 383–447 (QRYLGRVEEV…AFSLTGEALS (65 aa)) enclose the TRAM domain.

The protein belongs to the methylthiotransferase family. MiaB subfamily. Monomer. It depends on [4Fe-4S] cluster as a cofactor.

It localises to the cytoplasm. It carries out the reaction N(6)-dimethylallyladenosine(37) in tRNA + (sulfur carrier)-SH + AH2 + 2 S-adenosyl-L-methionine = 2-methylsulfanyl-N(6)-dimethylallyladenosine(37) in tRNA + (sulfur carrier)-H + 5'-deoxyadenosine + L-methionine + A + S-adenosyl-L-homocysteine + 2 H(+). Its function is as follows. Catalyzes the methylthiolation of N6-(dimethylallyl)adenosine (i(6)A), leading to the formation of 2-methylthio-N6-(dimethylallyl)adenosine (ms(2)i(6)A) at position 37 in tRNAs that read codons beginning with uridine. The sequence is that of tRNA-2-methylthio-N(6)-dimethylallyladenosine synthase from Synechocystis sp. (strain ATCC 27184 / PCC 6803 / Kazusa).